Reading from the N-terminus, the 386-residue chain is TRIBOA-glucoside O-methyltransferase BX7 (386 aa).

Residues Gly224, Asp248, Met270, and Lys283 each contribute to the S-adenosyl-L-methionine site. Catalysis depends on His287, which acts as the Proton acceptor.

It belongs to the class I-like SAM-binding methyltransferase superfamily. Cation-independent O-methyltransferase family. COMT subfamily. Expressed in seedlings and newly formed crown roots. Highest expression in the scutellar node. Low to non detectable levels in cob, tassel and mature organs like husk or leaves.

It catalyses the reaction TRIBOA beta-D-glucoside + S-adenosyl-L-methionine = DIMBOA beta-D-glucoside + S-adenosyl-L-homocysteine + H(+). O-methyltransferase involved in the benzoxazinoid glucoside biosynthesis. Can use 2,4,7-trihydroxy-2H-1,4-benzoxazin-3(4H)-one 2-D-glucoside (TRIBOA-glucoside) as substrate, but not aglucone TRIBOA, caffeic acid, ferulic acid, apigenin or quercetin. This Zea mays (Maize) protein is TRIBOA-glucoside O-methyltransferase BX7 (BX7).